Consider the following 314-residue polypeptide: Glutathione synthetase (314 aa).

One can recognise an ATP-grasp domain in the interval 125-311; the sequence is EKIAAQLFPQ…IAGQLFDAIE (187 aa). ATP is bound at residue 151–208; sequence FVQKQEQAILKPLDGMGGHSIFRSSNGDPNLNVILETLTDGGRTLAIAQRYLQQIIEG. Residues glutamate 282 and asparagine 284 each contribute to the Mg(2+) site.

Belongs to the prokaryotic GSH synthase family. Mg(2+) serves as cofactor. It depends on Mn(2+) as a cofactor.

The catalysed reaction is gamma-L-glutamyl-L-cysteine + glycine + ATP = glutathione + ADP + phosphate + H(+). It functions in the pathway sulfur metabolism; glutathione biosynthesis; glutathione from L-cysteine and L-glutamate: step 2/2. This Xylella fastidiosa (strain Temecula1 / ATCC 700964) protein is Glutathione synthetase.